We begin with the raw amino-acid sequence, 734 residues long: Methylcrotonoyl-CoA carboxylase subunit alpha, mitochondrial (734 aa).

Residues 1–25 (MSMMTVWALRRNVRRKNHSMLVRYI) constitute a mitochondrion transit peptide. In terms of domain architecture, Biotin carboxylation spans 37–484 (CIEKILVANR…ETHFIEHHKS (448 aa)). Residues K152, E236, and H271 each contribute to the ATP site. The region spanning 156 to 354 (KRIMGAAGVP…LVEWQIRVAN (199 aa)) is the ATP-grasp domain. Residues E311, E325, and N327 each contribute to the Mn(2+) site. R329 is an active-site residue. A Phosphoserine modification is found at S645. The tract at residues 645-666 (SEDEEGVQHRTSSETSSHPPGT) is disordered. The Biotinyl-binding domain maps to 657 to 733 (SETSSHPPGT…SDGSALFRIK (77 aa)). Residue K699 is modified to N6-biotinyllysine.

Probably a heterodimer composed of biotin-containing alpha subunits and beta subunits. Biotin serves as cofactor. Mn(2+) is required as a cofactor. In roots, cotyledons, leaves, flowers, ovaries, siliques and embryos.

It is found in the mitochondrion matrix. It carries out the reaction 3-methylbut-2-enoyl-CoA + hydrogencarbonate + ATP = 3-methyl-(2E)-glutaconyl-CoA + ADP + phosphate + H(+). It participates in amino-acid degradation; L-leucine degradation; (S)-3-hydroxy-3-methylglutaryl-CoA from 3-isovaleryl-CoA: step 2/3. Its function is as follows. Biotin-attachment subunit of the 3-methylcrotonyl-CoA carboxylase, an enzyme that catalyzes the conversion of 3-methylcrotonyl-CoA to 3-methylglutaconyl-CoA, a critical step for leucine and isovaleric acid catabolism. In Arabidopsis thaliana (Mouse-ear cress), this protein is Methylcrotonoyl-CoA carboxylase subunit alpha, mitochondrial (MCCA).